The primary structure comprises 89 residues: uncharacterized protein (89 aa).

A helical transmembrane segment spans residues 28-50 (LYLDLGFSALLFYNSNLLFSFIL).

Its subcellular location is the membrane. This is an uncharacterized protein from Archaeoglobus fulgidus (strain ATCC 49558 / DSM 4304 / JCM 9628 / NBRC 100126 / VC-16).